The primary structure comprises 348 residues: Nicotinate-nucleotide--dimethylbenzimidazole phosphoribosyltransferase (348 aa).

The Proton acceptor role is filled by Glu-316.

The protein belongs to the CobT family.

It catalyses the reaction 5,6-dimethylbenzimidazole + nicotinate beta-D-ribonucleotide = alpha-ribazole 5'-phosphate + nicotinate + H(+). Its pathway is nucleoside biosynthesis; alpha-ribazole biosynthesis; alpha-ribazole from 5,6-dimethylbenzimidazole: step 1/2. Its function is as follows. Catalyzes the synthesis of alpha-ribazole-5'-phosphate from nicotinate mononucleotide (NAMN) and 5,6-dimethylbenzimidazole (DMB). This Xanthomonas campestris pv. campestris (strain B100) protein is Nicotinate-nucleotide--dimethylbenzimidazole phosphoribosyltransferase.